A 267-amino-acid chain; its full sequence is Digeranylgeranylglyceryl phosphate synthase (267 aa).

7 consecutive transmembrane segments (helical) span residues 10–30 (ANCV…GALL), 33–53 (LHTP…GNAI), 80–100 (AALI…GLIN), 104–121 (LALA…AARL), 139–159 (TFLF…LSIL), 198–218 (VLAS…PLGI), and 247–267 (QRWI…GYHI).

Belongs to the UbiA prenyltransferase family. DGGGP synthase subfamily. Mg(2+) is required as a cofactor.

The protein resides in the cell membrane. It catalyses the reaction sn-3-O-(geranylgeranyl)glycerol 1-phosphate + (2E,6E,10E)-geranylgeranyl diphosphate = 2,3-bis-O-(geranylgeranyl)-sn-glycerol 1-phosphate + diphosphate. It participates in membrane lipid metabolism; glycerophospholipid metabolism. Functionally, prenyltransferase that catalyzes the transfer of the geranylgeranyl moiety of geranylgeranyl diphosphate (GGPP) to the C2 hydroxyl of (S)-3-O-geranylgeranylglyceryl phosphate (GGGP). This reaction is the second ether-bond-formation step in the biosynthesis of archaeal membrane lipids. The polypeptide is Digeranylgeranylglyceryl phosphate synthase (Methanothrix thermoacetophila (strain DSM 6194 / JCM 14653 / NBRC 101360 / PT) (Methanosaeta thermophila)).